The sequence spans 347 residues: MSYFYRLKLMKEAVLVKLPFTSLPLLLQTLSRKSRDMEIKNYSSSTSGFILLGLSSNPQLQKPLFAIFLIMYLLAAVGNVLIIPAIYSDPRLHTPMYFFLSNLSFMDICFTTVIVPKMLVNFLSETKVISYVGCLAQMYFFMAFGNTDSYLLASMAIDRLVAICNPLHYDVVMKPRHCLLMLLGSCSISHLHSLFRVLLMSRLSFCASHIIKHFFCDTQPVLKLSCSDTSSSQMVVMTETLAVIVTPFLCIIFSYLRIMVTVLRIPSAAGKWKAFSTCGSHLTAVALFYGSIIYVYFRPLSMYSVVRDRVATVMYTVVTPMLNPFIYSLRNKDMKRGLKKLQDRIYR.

At 1-62 (MSYFYRLKLM…GLSSNPQLQK (62 aa)) the chain is on the extracellular side. An N-linked (GlcNAc...) asparagine glycan is attached at N41. The helical transmembrane segment at 63 to 86 (PLFAIFLIMYLLAAVGNVLIIPAI) threads the bilayer. The Cytoplasmic portion of the chain corresponds to 87–94 (YSDPRLHT). The chain crosses the membrane as a helical span at residues 95 to 116 (PMYFFLSNLSFMDICFTTVIVP). The Extracellular segment spans residues 117–137 (KMLVNFLSETKVISYVGCLAQ). The cysteines at positions 134 and 226 are disulfide-linked. Residues 138–157 (MYFFMAFGNTDSYLLASMAI) form a helical membrane-spanning segment. At 158–176 (DRLVAICNPLHYDVVMKPR) the chain is on the cytoplasmic side. Residues 177–195 (HCLLMLLGSCSISHLHSLF) traverse the membrane as a helical segment. At 196–233 (RVLLMSRLSFCASHIIKHFFCDTQPVLKLSCSDTSSSQ) the chain is on the extracellular side. The helical transmembrane segment at 234–256 (MVVMTETLAVIVTPFLCIIFSYL) threads the bilayer. Over 257–273 (RIMVTVLRIPSAAGKWK) the chain is Cytoplasmic. Residues 274-296 (AFSTCGSHLTAVALFYGSIIYVY) traverse the membrane as a helical segment. Residues 297–309 (FRPLSMYSVVRDR) lie on the Extracellular side of the membrane. A helical membrane pass occupies residues 310 to 329 (VATVMYTVVTPMLNPFIYSL). Topologically, residues 330 to 347 (RNKDMKRGLKKLQDRIYR) are cytoplasmic.

This sequence belongs to the G-protein coupled receptor 1 family.

Its subcellular location is the cell membrane. In terms of biological role, odorant receptor. This chain is Olfactory receptor 1L6 (OR1L6), found in Homo sapiens (Human).